The primary structure comprises 134 residues: Ribonuclease VapC (134 aa).

One can recognise a PINc domain in the interval 4–124 (IVDTSIIIAL…NTKDFKRIPE (121 aa)). Aspartate 6 is a Mg(2+) binding site.

The protein belongs to the PINc/VapC protein family. It depends on Mg(2+) as a cofactor.

Toxic component of a type II toxin-antitoxin (TA) system. Has ssRNase activity. Its RNase activity is partially neutralized by cognate antitoxin VapB. Rapidly induces apoptosis upon microinjection into mouse fibroblasts (L929 line). Probably contributes to host cell death if bacterial cell lysis occurs during host infection. The chain is Ribonuclease VapC from Rickettsia bellii (strain RML369-C).